Here is a 376-residue protein sequence, read N- to C-terminus: 28S rRNA (uridine-N(3))-methyltransferase (376 aa).

Disordered regions lie at residues 1–33 (MAER…EEKK) and 49–71 (AQEE…DRGR). Over residues 15–33 (HGQRIEWRKWKQQKKEEKK) the composition is skewed to basic and acidic residues. Residues Thr289, Arg292, Gly312, Asn341, and Thr342 each contribute to the S-adenosyl-L-homocysteine site. S-adenosyl-L-methionine contacts are provided by Arg292, Gly312, Asn341, and Thr342.

It belongs to the class IV-like SAM-binding methyltransferase superfamily. As to quaternary structure, interacts with INCA1.

The protein localises to the cytoplasm. The protein resides in the cytoskeleton. It localises to the spindle. It is found in the chromosome. Its subcellular location is the centromere. The protein localises to the kinetochore. The protein resides in the microtubule organizing center. It localises to the centrosome. It carries out the reaction uridine in 28S rRNA + S-adenosyl-L-methionine = N(3)-methyluridine in 28S rRNA + S-adenosyl-L-homocysteine + H(+). Functionally, S-adenosyl-L-methionine-dependent methyltransferase that specifically methylates the N3 position of a uridine in 28S rRNA. Required for association of the centrosomes with the poles of the bipolar mitotic spindle during metaphase. Also involved in chromosome alignment. May promote centrosome maturation probably by recruiting A-kinase anchor protein AKAP9 to centrosomes in early mitosis. Binds specifically to miRNA MIR145 hairpin, regulates MIR145 expression at a postranscriptional level. This is 28S rRNA (uridine-N(3))-methyltransferase from Homo sapiens (Human).